We begin with the raw amino-acid sequence, 214 residues long: Calcineurin B homologous protein 3 (214 aa).

Positions 1 to 20 (MGAAHSASEEVRELEGKTGF) are disordered. Residue Gly2 is the site of N-myristoyl glycine attachment. Residues 7–16 (ASEEVRELEG) show a composition bias toward basic and acidic residues. The 36-residue stretch at 110 to 145 (SRKEKLRFLFHMYDSDSDGRITLEEYRNVVEELLSG) folds into the EF-hand domain. The Ca(2+) site is built by Asp123, Asp125, Asp127, Arg129, and Glu134.

The protein belongs to the calcineurin regulatory subunit family. CHP subfamily. In terms of assembly, monomer. Homodimer; disulfide-linked. Interacts with SLC9A1/NHE1; the interaction enables an optimal Na(+)/H(+) exchange activity. Expressed in mature megakaryocytes and polymorphonuclear granulocytes (at protein level). Abundantly expressed in heart. Also expressed at a lower level in adult testis and salivary gland, and in the placenta.

It localises to the nucleus. It is found in the cytoplasm. Its subcellular location is the membrane. The protein localises to the cell membrane. The protein resides in the cell projection. It localises to the lamellipodium. It is found in the ruffle membrane. In terms of biological role, functions as an integral cofactor in cell pH regulation by controlling plasma membrane-type Na(+)/H(+) exchange activity. Promotes the maturation, transport, cell surface stability and exchange activity of SLC9A1/NHE1 at the plasma membrane. Promotes the induction of hematopoietic stem cell differentiation toward megakaryocytic lineage. Essential for the coupling of ERK cascade activation with the expression of ETS family genes in megakaryocytic differentiation. Also involved in granulocytic differentiation in a ERK-dependent manner. Inhibits the phosphatase activity of calcineurin. This is Calcineurin B homologous protein 3 (TESC) from Homo sapiens (Human).